The sequence spans 655 residues: Sphingomyelin phosphodiesterase 3 (655 aa).

At 1–10 (MVLYTTPFPN) the chain is on the cytoplasmic side. Positions 11 to 31 (SCLSALHCVSWALIFPCYWLV) form an intramembrane region, helical. Residues 32–64 (DRLAASFIPTTYEKRQRADDPCCLQLLCTALFT) lie on the Cytoplasmic side of the membrane. 3 S-palmitoyl cysteine lipidation sites follow: Cys53, Cys54, and Cys59. Positions 65-85 (PIYLALLVASLPFAFLGFLFW) form an intramembrane region, helical. The Cytoplasmic portion of the chain corresponds to 86–655 (SPLQSARRPY…LMVSSGEEEA (570 aa)). Ser178 carries the post-translational modification Phosphoserine. The interval 210 to 319 (VEYKGDGGRH…DTSASGEPGA (110 aa)) is disordered. 2 stretches are compositionally biased toward basic and acidic residues: residues 212-222 (YKGDGGRHPGD) and 248-257 (GGEEGGRPPE). Residues 279-299 (TPNHNQQDGDSGSLGSPSASR) show a composition bias toward polar residues. Ser291 is subject to Phosphoserine. Glu364 provides a ligand contact to Mg(2+). S-palmitoyl cysteine attachment occurs at residues Cys397 and Cys398. Residue His639 is the Proton acceptor of the active site.

The protein belongs to the neutral sphingomyelinase family. Requires Mg(2+) as cofactor. Post-translationally, palmitoylated, palmitoylation-deficient proteins are targeted for lysosomal degradation. In terms of tissue distribution, predominantly expressed in brain.

Its subcellular location is the golgi apparatus membrane. It is found in the cell membrane. It catalyses the reaction a sphingomyelin + H2O = phosphocholine + an N-acylsphing-4-enine + H(+). It carries out the reaction N-(15Z-tetracosenoyl)sphing-4-enine-1-phosphocholine + H2O = N-(15Z-tetracosenoyl)-sphing-4-enine + phosphocholine + H(+). The enzyme catalyses N-(tetracosanoyl)-sphing-4-enine-1-phosphocholine + H2O = N-tetracosanoyl-sphing-4-enine + phosphocholine + H(+). The catalysed reaction is an N-(acyl)-sphingosylphosphocholine + H2O = an N-acyl-sphingoid base + phosphocholine + H(+). It catalyses the reaction 1-hexadecanoyl-sn-glycero-3-phosphocholine + H2O = 1-hexadecanoyl-sn-glycerol + phosphocholine + H(+). It carries out the reaction 1-O-octadecyl-sn-glycero-3-phosphocholine + H2O = 1-O-octadecyl-sn-glycerol + phosphocholine + H(+). The enzyme catalyses a sphingosylphosphocholine + H2O = a sphingoid base + phosphocholine + H(+). The catalysed reaction is N-(hexadecanoyl)-sphing-4-enine-1-phosphocholine + H2O = N-hexadecanoylsphing-4-enine + phosphocholine + H(+). Its pathway is lipid metabolism; sphingolipid metabolism. Inhibited by nSMase inhibitor GW4869. Binding of anionic phospholipids (APLs) such as phosphatidylserine (PS) and phosphatidic acid (PA) increases enzymatic activity. In terms of biological role, catalyzes the hydrolysis of sphingomyelin to form ceramide and phosphocholine. Ceramide mediates numerous cellular functions, such as apoptosis and growth arrest, and is capable of regulating these 2 cellular events independently. Also hydrolyzes sphingosylphosphocholine. Regulates the cell cycle by acting as a growth suppressor in confluent cells. Probably acts as a regulator of postnatal development and participates in bone and dentin mineralization. Binds to anionic phospholipids (APLs) such as phosphatidylserine (PS) and phosphatidic acid (PA) that modulate enzymatic activity and subcellular location. May be involved in IL-1-beta-induced JNK activation in hepatocytes. May act as a mediator in transcriptional regulation of NOS2/iNOS via the NF-kappa-B activation under inflammatory conditions. The protein is Sphingomyelin phosphodiesterase 3 of Homo sapiens (Human).